The following is a 184-amino-acid chain: Tumor necrosis factor alpha-induced protein 8-like protein 2 (184 aa).

Ser3 carries the post-translational modification Phosphoserine.

The protein belongs to the TNFAIP8 family. TNFAIP8L2 subfamily. May interact with CASP8; however, such result is unclear since could not reproduce the interaction with CASP8. Interacts with RAC1. In terms of processing, phosphorylated by TAK1/MAP3K7; this phosphorylation triggers association with BTRC and subsequent ubiquitination and degradation. Ubiquitinated in a BTRC-depdent manner; leading to degradation mediated through the proteasome pathway. Expressed in thymus, spleen, lymph node and small intestine, but not in liver, heart, muscle, testis, spinal cord or brain. Up-regulated in the spinal cord of mice with experimental autoimmune encephalomyelitis. Constitutively expressed by macrophages, B and T-lymphocytes at various developmental stages.

Its subcellular location is the cytoplasm. The protein resides in the nucleus. It is found in the lysosome. Its function is as follows. Acts as a negative regulator of innate and adaptive immunity by maintaining immune homeostasis. Plays a regulatory role in the Toll-like signaling pathway by determining the strength of LPS-induced signaling and gene expression. Inhibits TCR-mediated T-cell activation and negatively regulate T-cell function to prevent hyperresponsiveness. Also inhibits autolysosome formation via negatively modulating MTOR activation by interacting with RAC1 and promoting the disassociation of the RAC1-MTOR complex. Plays an essential role in NK-cell biology by acting as a checkpoint and displaying an expression pattern correlating with NK-cell maturation process and by negatively regulating NK-cell maturation and antitumor immunity. Mechanistically, suppresses IL-15-triggered mTOR activity in NK-cells. The chain is Tumor necrosis factor alpha-induced protein 8-like protein 2 (Tnfaip8l2) from Mus musculus (Mouse).